The chain runs to 199 residues: N-(5'-phosphoribosyl)anthranilate isomerase (199 aa).

It belongs to the TrpF family.

It catalyses the reaction N-(5-phospho-beta-D-ribosyl)anthranilate = 1-(2-carboxyphenylamino)-1-deoxy-D-ribulose 5-phosphate. It functions in the pathway amino-acid biosynthesis; L-tryptophan biosynthesis; L-tryptophan from chorismate: step 3/5. In Streptococcus pneumoniae serotype 19F (strain G54), this protein is N-(5'-phosphoribosyl)anthranilate isomerase.